The following is a 213-amino-acid chain: Protein GrpE (213 aa).

Over residues 1–23 (MSDEKKPEAETSESLQKREEKLA) the composition is skewed to basic and acidic residues. The segment at 1–43 (MSDEKKPEAETSESLQKREEKLAETLASEPAAQGEAEDAAAAG) is disordered. Low complexity predominate over residues 29–43 (EPAAQGEAEDAAAAG).

It belongs to the GrpE family. Homodimer.

The protein resides in the cytoplasm. Participates actively in the response to hyperosmotic and heat shock by preventing the aggregation of stress-denatured proteins, in association with DnaK and GrpE. It is the nucleotide exchange factor for DnaK and may function as a thermosensor. Unfolded proteins bind initially to DnaJ; upon interaction with the DnaJ-bound protein, DnaK hydrolyzes its bound ATP, resulting in the formation of a stable complex. GrpE releases ADP from DnaK; ATP binding to DnaK triggers the release of the substrate protein, thus completing the reaction cycle. Several rounds of ATP-dependent interactions between DnaJ, DnaK and GrpE are required for fully efficient folding. The chain is Protein GrpE from Parvibaculum lavamentivorans (strain DS-1 / DSM 13023 / NCIMB 13966).